The chain runs to 342 residues: S-adenosylmethionine:tRNA ribosyltransferase-isomerase (342 aa).

Belongs to the QueA family. Monomer.

Its subcellular location is the cytoplasm. It carries out the reaction 7-aminomethyl-7-carbaguanosine(34) in tRNA + S-adenosyl-L-methionine = epoxyqueuosine(34) in tRNA + adenine + L-methionine + 2 H(+). Its pathway is tRNA modification; tRNA-queuosine biosynthesis. Functionally, transfers and isomerizes the ribose moiety from AdoMet to the 7-aminomethyl group of 7-deazaguanine (preQ1-tRNA) to give epoxyqueuosine (oQ-tRNA). The sequence is that of S-adenosylmethionine:tRNA ribosyltransferase-isomerase from Campylobacter jejuni subsp. jejuni serotype O:6 (strain 81116 / NCTC 11828).